The chain runs to 629 residues: LEAF RUST 10 DISEASE-RESISTANCE LOCUS RECEPTOR-LIKE PROTEIN KINASE-like 1.1 (629 aa).

Residues 1-19 (METVSVLLFFFLFLLAAEA) form the signal peptide. The Extracellular portion of the chain corresponds to 20–225 (RSTKRTGCKD…PNNYHAEMRL (206 aa)). Asn-56, Asn-92, Asn-123, Asn-124, Asn-172, and Asn-177 each carry an N-linked (GlcNAc...) asparagine glycan. A helical transmembrane segment spans residues 226–246 (GLGIGGSVILIIILVALFAVI). At 247-629 (HRNYRRKDGS…TTPNTSAYEF (383 aa)) the chain is on the cytoplasmic side. In terms of domain architecture, Protein kinase spans 291–565 (FSKDRLLGDG…TMEQVVHELK (275 aa)). ATP is bound by residues 297-305 (LGDGGFGTV) and Lys-319. Tyr-365 is subject to Phosphotyrosine. Asp-416 (proton acceptor) is an active-site residue. At Ser-449 the chain carries Phosphoserine. A phosphothreonine mark is found at Thr-450 and Thr-455. At Tyr-463 the chain carries Phosphotyrosine. Positions 609–629 (VSVTDQWTSKSTTPNTSAYEF) are disordered.

This sequence belongs to the protein kinase superfamily. Ser/Thr protein kinase family.

It localises to the cell membrane. The enzyme catalyses L-seryl-[protein] + ATP = O-phospho-L-seryl-[protein] + ADP + H(+). It catalyses the reaction L-threonyl-[protein] + ATP = O-phospho-L-threonyl-[protein] + ADP + H(+). This chain is LEAF RUST 10 DISEASE-RESISTANCE LOCUS RECEPTOR-LIKE PROTEIN KINASE-like 1.1, found in Arabidopsis thaliana (Mouse-ear cress).